The chain runs to 148 residues: MRIVLQKVSSAQVSVGEKILGEIGVGFVLLVGIENTDGKEEVDYLARKISHLRVFADQNDKMNLSITDVKGSILSISQFTLYADTKKGNRPSFINAGDPEHAKTVYQAFNQALMNHNLKVATGEFGAHMEVKLENDGPVTIIFDTDHK.

The short motif at 137–138 (GP) is the Gly-cisPro motif, important for rejection of L-amino acids element.

This sequence belongs to the DTD family. As to quaternary structure, homodimer.

It localises to the cytoplasm. It catalyses the reaction glycyl-tRNA(Ala) + H2O = tRNA(Ala) + glycine + H(+). The enzyme catalyses a D-aminoacyl-tRNA + H2O = a tRNA + a D-alpha-amino acid + H(+). In terms of biological role, an aminoacyl-tRNA editing enzyme that deacylates mischarged D-aminoacyl-tRNAs. Also deacylates mischarged glycyl-tRNA(Ala), protecting cells against glycine mischarging by AlaRS. Acts via tRNA-based rather than protein-based catalysis; rejects L-amino acids rather than detecting D-amino acids in the active site. By recycling D-aminoacyl-tRNA to D-amino acids and free tRNA molecules, this enzyme counteracts the toxicity associated with the formation of D-aminoacyl-tRNA entities in vivo and helps enforce protein L-homochirality. The polypeptide is D-aminoacyl-tRNA deacylase (Oenococcus oeni (strain ATCC BAA-331 / PSU-1)).